We begin with the raw amino-acid sequence, 209 residues long: MGTVHLIDHPLVQHKLTMMRRKDASTNSFRRLANEISALMTYEVLRDIPMQEIEIETPLEVTTGRVIDGKKLVFVSILRAGTGILDGMLTIVPGARVGHIGLYRDPRTLVAVEYYFKMPGDLHERDVVVVDPLLATGNSAVAAVERLKECGPKSIKFVCLLTCPEGVAALDKAHPDVPIYTAAVDRQLDEHGYILPGIGDAGDRIFGTK.

5-phospho-alpha-D-ribose 1-diphosphate is bound by residues R79, R104, and D131–S139. Uracil contacts are provided by residues I194 and G199–A201. 5-phospho-alpha-D-ribose 1-diphosphate is bound at residue D200.

It belongs to the UPRTase family. The cofactor is Mg(2+).

It catalyses the reaction UMP + diphosphate = 5-phospho-alpha-D-ribose 1-diphosphate + uracil. It participates in pyrimidine metabolism; UMP biosynthesis via salvage pathway; UMP from uracil: step 1/1. Its activity is regulated as follows. Allosterically activated by GTP. Catalyzes the conversion of uracil and 5-phospho-alpha-D-ribose 1-diphosphate (PRPP) to UMP and diphosphate. This Rhodococcus opacus (strain B4) protein is Uracil phosphoribosyltransferase.